Here is a 27-residue protein sequence, read N- to C-terminus: Bombinin-like peptide 2 (27 aa).

N27 is modified (asparagine amide).

Belongs to the bombinin family. Expressed by the skin glands.

It is found in the secreted. Has antimicrobial activity, but no hemolytic activity. Preference on killing Gram-negative non-enteric bacteria. The polypeptide is Bombinin-like peptide 2 (Bombina orientalis (Oriental fire-bellied toad)).